The sequence spans 84 residues: Small ribosomal subunit protein uS17 (84 aa).

The protein belongs to the universal ribosomal protein uS17 family. As to quaternary structure, part of the 30S ribosomal subunit.

Its function is as follows. One of the primary rRNA binding proteins, it binds specifically to the 5'-end of 16S ribosomal RNA. This chain is Small ribosomal subunit protein uS17, found in Clostridium novyi (strain NT).